Reading from the N-terminus, the 317-residue chain is tRNA dimethylallyltransferase (317 aa).

Residue G21–S28 coordinates ATP. T23–S28 contributes to the substrate binding site. Positions D46 to Q49 are interaction with substrate tRNA.

This sequence belongs to the IPP transferase family. As to quaternary structure, monomer. Mg(2+) serves as cofactor.

It carries out the reaction adenosine(37) in tRNA + dimethylallyl diphosphate = N(6)-dimethylallyladenosine(37) in tRNA + diphosphate. In terms of biological role, catalyzes the transfer of a dimethylallyl group onto the adenine at position 37 in tRNAs that read codons beginning with uridine, leading to the formation of N6-(dimethylallyl)adenosine (i(6)A). This Nitrobacter hamburgensis (strain DSM 10229 / NCIMB 13809 / X14) protein is tRNA dimethylallyltransferase.